Here is an 800-residue protein sequence, read N- to C-terminus: Phosphoinositide 3-kinase adapter protein 1 (800 aa).

Residues 8-145 (GGYDVLILYA…AVKKAISEDS (138 aa)) form the TIR domain. Residues 10 to 144 (YDVLILYASD…EAVKKAISED (135 aa)) are necessary and sufficient to mediate inhibition of NF-kappa-B downstream of activated TLRs. The DBB domain maps to 185–321 (VQPDHIRCGV…NIPASGLHLF (137 aa)). Residue Tyr-266 is modified to Phosphotyrosine. Phosphotyrosine; by SYK is present on residues Tyr-423, Tyr-448, and Tyr-463. The disordered stretch occupies residues 527-548 (EMASRPPVPVPRPESSSPQPDN). Residues 643–663 (QQENLKRLRDSITRRQMEKQK) adopt a coiled-coil conformation. The span at 702-713 (PKKELKRGDWKT) shows a compositional bias: basic and acidic residues. The tract at residues 702 to 800 (PKKELKRGDW…YPPPVPPRGR (99 aa)) is disordered. The span at 714-737 (ESTSSTTSSASNRSSTRSILSVSS) shows a compositional bias: low complexity. Polar residues predominate over residues 749–759 (SEASRSRSPIP). Pro residues-rich tracts occupy residues 767 to 777 (LPLPERPPRVP) and 791 to 800 (YPPPVPPRGR).

In terms of assembly, homooligomer. Interacts (phosphorylated on tyrosine residues within YXXM motifs) with PIK3R1 (via SH2 domain); required for BCR- and TLR-mediated activation of phosphoinositide 3-kinase. Post-translationally, constitutively phosphorylated. Phosphorylated on tyrosine residues within the YXXM motifs by BTK and SYK. Isoform 1 and isoform 2 are phosphorylated on tyrosine residues, most likely within the YXXM motifs, via CD19 activation.

The protein localises to the cytoplasm. It is found in the cell membrane. In terms of biological role, signaling adapter that contributes to B-cell development by linking B-cell receptor (BCR) signaling to the phosphoinositide 3-kinase (PI3K)-Akt signaling pathway. Has a complementary role to the BCR coreceptor CD19, coupling BCR and PI3K activation by providing a docking site for the PI3K subunit PIK3R1. Alternatively, links Toll-like receptor (TLR) signaling to PI3K activation, a process preventing excessive inflammatory cytokine production. Also involved in the activation of PI3K in natural killer cells. May be involved in the survival of mature B-cells via activation of REL. In Gallus gallus (Chicken), this protein is Phosphoinositide 3-kinase adapter protein 1 (PIK3AP1).